The primary structure comprises 424 residues: Serine--tRNA ligase (424 aa).

L-serine is bound at residue 231 to 233 (TAE). Residue 262–264 (RAE) participates in ATP binding. Position 285 (glutamate 285) interacts with L-serine. 349-352 (EISS) provides a ligand contact to ATP. Residue serine 385 coordinates L-serine.

It belongs to the class-II aminoacyl-tRNA synthetase family. Type-1 seryl-tRNA synthetase subfamily. As to quaternary structure, homodimer. The tRNA molecule binds across the dimer.

The protein resides in the cytoplasm. The catalysed reaction is tRNA(Ser) + L-serine + ATP = L-seryl-tRNA(Ser) + AMP + diphosphate + H(+). It catalyses the reaction tRNA(Sec) + L-serine + ATP = L-seryl-tRNA(Sec) + AMP + diphosphate + H(+). It functions in the pathway aminoacyl-tRNA biosynthesis; selenocysteinyl-tRNA(Sec) biosynthesis; L-seryl-tRNA(Sec) from L-serine and tRNA(Sec): step 1/1. Functionally, catalyzes the attachment of serine to tRNA(Ser). Is also able to aminoacylate tRNA(Sec) with serine, to form the misacylated tRNA L-seryl-tRNA(Sec), which will be further converted into selenocysteinyl-tRNA(Sec). The polypeptide is Serine--tRNA ligase (Geobacillus kaustophilus (strain HTA426)).